Here is a 212-residue protein sequence, read N- to C-terminus: FMN-dependent NADH:quinone oxidoreductase 1 (212 aa).

Residues serine 10, 16–18, 97–100, and 145–148 each bind FMN; these read SHS, MYNF, and SRGG.

This sequence belongs to the azoreductase type 1 family. Homodimer. The cofactor is FMN.

It carries out the reaction 2 a quinone + NADH + H(+) = 2 a 1,4-benzosemiquinone + NAD(+). The catalysed reaction is N,N-dimethyl-1,4-phenylenediamine + anthranilate + 2 NAD(+) = 2-(4-dimethylaminophenyl)diazenylbenzoate + 2 NADH + 2 H(+). Its function is as follows. Quinone reductase that provides resistance to thiol-specific stress caused by electrophilic quinones. Also exhibits azoreductase activity. Catalyzes the reductive cleavage of the azo bond in aromatic azo compounds to the corresponding amines. This Pseudomonas fluorescens (strain Pf0-1) protein is FMN-dependent NADH:quinone oxidoreductase 1.